We begin with the raw amino-acid sequence, 499 residues long: T-cell activation inhibitor, mitochondrial (499 aa).

Residues 206–233 adopt a coiled-coil conformation; that stretch reads LRNSLPLRKELDRLKNELSELLQLSDIR.

Expressed in peripheral blood leukocytes, mainly in T-lymphocytes.

The protein resides in the mitochondrion. May regulate T-cell apoptosis. The polypeptide is T-cell activation inhibitor, mitochondrial (TCAIM) (Mus musculus (Mouse)).